The primary structure comprises 105 residues: MAAKIRRNDEVIVLAGKDKGKKGKVTKVLATGKVIVEGINLVKKHQKPVPALGIQGGIVEQEAAIDVSNVAIFNAATGKADRIGFRFEDGKKVRFFKSNNEIVSN.

The protein belongs to the universal ribosomal protein uL24 family. In terms of assembly, part of the 50S ribosomal subunit.

Its function is as follows. One of two assembly initiator proteins, it binds directly to the 5'-end of the 23S rRNA, where it nucleates assembly of the 50S subunit. One of the proteins that surrounds the polypeptide exit tunnel on the outside of the subunit. This Vibrio campbellii (strain ATCC BAA-1116) protein is Large ribosomal subunit protein uL24.